The primary structure comprises 81 residues: Photosystem I iron-sulfur center (81 aa).

4Fe-4S ferredoxin-type domains are found at residues 2 to 31 and 39 to 68; these read SHSV…MIPW and IASA…VRVY. Residues Cys11, Cys14, Cys17, Cys21, Cys48, Cys51, Cys54, and Cys58 each coordinate [4Fe-4S] cluster.

In terms of assembly, the eukaryotic PSI reaction center is composed of at least 11 subunits. [4Fe-4S] cluster is required as a cofactor.

Its subcellular location is the plastid thylakoid membrane. It carries out the reaction reduced [plastocyanin] + hnu + oxidized [2Fe-2S]-[ferredoxin] = oxidized [plastocyanin] + reduced [2Fe-2S]-[ferredoxin]. Apoprotein for the two 4Fe-4S centers FA and FB of photosystem I (PSI); essential for photochemical activity. FB is the terminal electron acceptor of PSI, donating electrons to ferredoxin. The C-terminus interacts with PsaA/B/D and helps assemble the protein into the PSI complex. Required for binding of PsaD and PsaE to PSI. PSI is a plastocyanin-ferredoxin oxidoreductase, converting photonic excitation into a charge separation, which transfers an electron from the donor P700 chlorophyll pair to the spectroscopically characterized acceptors A0, A1, FX, FA and FB in turn. This chain is Photosystem I iron-sulfur center, found in Cuscuta gronovii (Common dodder).